The following is a 169-amino-acid chain: Peptide methionine sulfoxide reductase MsrA (169 aa).

The active site involves cysteine 10.

This sequence belongs to the MsrA Met sulfoxide reductase family.

The catalysed reaction is L-methionyl-[protein] + [thioredoxin]-disulfide + H2O = L-methionyl-(S)-S-oxide-[protein] + [thioredoxin]-dithiol. It catalyses the reaction [thioredoxin]-disulfide + L-methionine + H2O = L-methionine (S)-S-oxide + [thioredoxin]-dithiol. Its function is as follows. Has an important function as a repair enzyme for proteins that have been inactivated by oxidation. Catalyzes the reversible oxidation-reduction of methionine sulfoxide in proteins to methionine. This chain is Peptide methionine sulfoxide reductase MsrA, found in Streptococcus mutans serotype c (strain ATCC 700610 / UA159).